The sequence spans 447 residues: DNA primase DnaG (447 aa).

In terms of domain architecture, Toprim spans 200-274 (DSIIVVEGRA…DIDYVARAPE (75 aa)). Glutamate 206, aspartate 248, and aspartate 250 together coordinate Mg(2+).

The protein belongs to the archaeal DnaG primase family. In terms of assembly, forms a ternary complex with MCM helicase and DNA. Component of the archaeal exosome complex. Mg(2+) serves as cofactor.

It carries out the reaction ssDNA + n NTP = ssDNA/pppN(pN)n-1 hybrid + (n-1) diphosphate.. Its function is as follows. RNA polymerase that catalyzes the synthesis of short RNA molecules used as primers for DNA polymerase during DNA replication. Also part of the exosome, which is a complex involved in RNA degradation. Acts as a poly(A)-binding protein that enhances the interaction between heteromeric, adenine-rich transcripts and the exosome. This Pyrococcus abyssi (strain GE5 / Orsay) protein is DNA primase DnaG.